The primary structure comprises 252 residues: ATP synthase subunit a (252 aa).

5 helical membrane passes run 33 to 53, 92 to 112, 130 to 150, 196 to 216, and 217 to 237; these read GQVF…ALAA, VPFV…GALV, DINT…YAGL, LVVG…VMAL, and GLFT…TYIG.

It belongs to the ATPase A chain family. In terms of assembly, F-type ATPases have 2 components, CF(1) - the catalytic core - and CF(0) - the membrane proton channel. CF(1) has five subunits: alpha(3), beta(3), gamma(1), delta(1), epsilon(1). CF(0) has three main subunits: a(1), b(2) and c(9-12). The alpha and beta chains form an alternating ring which encloses part of the gamma chain. CF(1) is attached to CF(0) by a central stalk formed by the gamma and epsilon chains, while a peripheral stalk is formed by the delta and b chains.

It is found in the cellular thylakoid membrane. Its function is as follows. Key component of the proton channel; it plays a direct role in the translocation of protons across the membrane. The polypeptide is ATP synthase subunit a (Synechococcus sp. (strain PCC 6716)).